The following is a 184-amino-acid chain: MATRIRLQRHGRKSYAFYSIVIADSRAPRDGKFIEKIGTYNPNTNPATVDLNFDAALAWVLKGAQPSDTVRNILSREGVYMKKHLLGGVAKGAFGEAEAEAKFEAWKNNKQSGLAALKAKQDEEKKAEAKARLEAEKKINEVKAKALAEKKAAEAAEKAAAEAPAEEATEAPAEEAAATEAAAE.

Over residues 150–160 (KKAAEAAEKAA) the composition is skewed to basic and acidic residues. The segment at 150–184 (KKAAEAAEKAAAEAPAEEATEAPAEEAAATEAAAE) is disordered. Over residues 164–173 (PAEEATEAPA) the composition is skewed to acidic residues. Positions 174-184 (EEAAATEAAAE) are enriched in low complexity.

This sequence belongs to the bacterial ribosomal protein bS16 family.

This chain is Small ribosomal subunit protein bS16, found in Bacteroides thetaiotaomicron (strain ATCC 29148 / DSM 2079 / JCM 5827 / CCUG 10774 / NCTC 10582 / VPI-5482 / E50).